We begin with the raw amino-acid sequence, 232 residues long: Flagellar L-ring protein (232 aa).

A signal peptide spans 1–21 (MQKYALHAYPVMALMVATLTG). C22 carries N-palmitoyl cysteine lipidation. C22 carries S-diacylglycerol cysteine lipidation.

The protein belongs to the FlgH family. In terms of assembly, the basal body constitutes a major portion of the flagellar organelle and consists of four rings (L,P,S, and M) mounted on a central rod.

It localises to the cell outer membrane. Its subcellular location is the bacterial flagellum basal body. Its function is as follows. Assembles around the rod to form the L-ring and probably protects the motor/basal body from shearing forces during rotation. This is Flagellar L-ring protein from Salmonella choleraesuis (strain SC-B67).